Here is a 554-residue protein sequence, read N- to C-terminus: Glucose-6-phosphate isomerase (554 aa).

E359 acts as the Proton donor in catalysis. Residues H390 and K518 contribute to the active site.

It belongs to the GPI family.

It localises to the cytoplasm. It carries out the reaction alpha-D-glucose 6-phosphate = beta-D-fructose 6-phosphate. Its pathway is carbohydrate biosynthesis; gluconeogenesis. The protein operates within carbohydrate degradation; glycolysis; D-glyceraldehyde 3-phosphate and glycerone phosphate from D-glucose: step 2/4. In terms of biological role, catalyzes the reversible isomerization of glucose-6-phosphate to fructose-6-phosphate. The protein is Glucose-6-phosphate isomerase of Pseudomonas putida (strain GB-1).